Consider the following 751-residue polypeptide: Semaphorin-3C (751 aa).

The first 21 residues, 1–21 (MAFRTICVLVGVFICSICVKG), serve as a signal peptide directing secretion. The 484-residue stretch at 28–511 (RVYLTFDELR…SNEGVSQVSL (484 aa)) folds into the Sema domain. Asn-81 carries an N-linked (GlcNAc...) asparagine glycan. A disulfide bridge links Cys-101 with Cys-112. The N-linked (GlcNAc...) asparagine glycan is linked to Asn-123. Residues Cys-130 and Cys-139 are joined by a disulfide bond. N-linked (GlcNAc...) asparagine glycosylation is found at Asn-252 and Asn-268. Cystine bridges form between Cys-266/Cys-378 and Cys-290/Cys-338. Residue Asn-465 is glycosylated (N-linked (GlcNAc...) asparagine). Cysteines 514 and 532 form a disulfide. An Ig-like C2-type domain is found at 571 to 655 (AYRNAAEIVQ…TENSFKQTIA (85 aa)). 2 N-linked (GlcNAc...) asparagine glycosylation sites follow: Asn-585 and Asn-586. Residues Cys-592 and Cys-643 are joined by a disulfide bond. A compositionally biased stretch (basic and acidic residues) spans 712–731 (TRQQHQQGDESQKMRGDYGK). Residues 712 to 751 (TRQQHQQGDESQKMRGDYGKLKALINSRKSRNRRNQLPES) form a disordered region.

Belongs to the semaphorin family. Interacts with PLXND1.

It localises to the secreted. In terms of biological role, binds to plexin family members and plays an important role in the regulation of developmental processes. Required for normal cardiovascular development during embryogenesis. Functions as attractant for growing axons, and thereby plays an important role in axon growth and axon guidance. This Pongo abelii (Sumatran orangutan) protein is Semaphorin-3C (SEMA3C).